The chain runs to 320 residues: Methenyltetrahydromethanopterin cyclohydrolase (320 aa).

The protein belongs to the MCH family.

The protein resides in the cytoplasm. It carries out the reaction 5,10-methenyl-5,6,7,8-tetrahydromethanopterin + H2O = N(5)-formyl-5,6,7,8-tetrahydromethanopterin + H(+). Its function is as follows. Catalyzes the hydrolysis of methenyl-H(4)MPT(+) to 5-formyl-H(4)MPT. The chain is Methenyltetrahydromethanopterin cyclohydrolase from Methanococcoides burtonii (strain DSM 6242 / NBRC 107633 / OCM 468 / ACE-M).